Reading from the N-terminus, the 485-residue chain is Glutamyl-tRNA(Gln) amidotransferase subunit A (485 aa).

Active-site charge relay system residues include Lys-78 and Ser-153. The Acyl-ester intermediate role is filled by Ser-177.

Belongs to the amidase family. GatA subfamily. Heterotrimer of A, B and C subunits.

It carries out the reaction L-glutamyl-tRNA(Gln) + L-glutamine + ATP + H2O = L-glutaminyl-tRNA(Gln) + L-glutamate + ADP + phosphate + H(+). Its function is as follows. Allows the formation of correctly charged Gln-tRNA(Gln) through the transamidation of misacylated Glu-tRNA(Gln) in organisms which lack glutaminyl-tRNA synthetase. The reaction takes place in the presence of glutamine and ATP through an activated gamma-phospho-Glu-tRNA(Gln). The sequence is that of Glutamyl-tRNA(Gln) amidotransferase subunit A from Bacillus cytotoxicus (strain DSM 22905 / CIP 110041 / 391-98 / NVH 391-98).